The following is a 350-amino-acid chain: Probable 2-dehydropantoate 2-reductase (350 aa).

Residues 9–14 (GAGSIG) and Asn-115 contribute to the NADP(+) site. Asn-115 is a binding site for substrate. Lys-213 serves as the catalytic Proton donor. Substrate is bound by residues Asn-217, Asn-221, and Ser-295. An NADP(+)-binding site is contributed by Glu-307.

The protein belongs to the ketopantoate reductase family.

It catalyses the reaction (R)-pantoate + NADP(+) = 2-dehydropantoate + NADPH + H(+). It participates in cofactor biosynthesis; (R)-pantothenate biosynthesis; (R)-pantoate from 3-methyl-2-oxobutanoate: step 2/2. In terms of biological role, catalyzes the NADPH-dependent reduction of ketopantoate into pantoic acid. The polypeptide is Probable 2-dehydropantoate 2-reductase (Schizosaccharomyces pombe (strain 972 / ATCC 24843) (Fission yeast)).